Here is a 389-residue protein sequence, read N- to C-terminus: Large envelope protein (389 aa).

Met-1 carries the N-acetylmethionine modification. The N-myristoyl glycine; by host moiety is linked to residue Gly-2. Residues 2–108 are pre-S1; that stretch reads GQNLSTSNPL…PPLRNTHPQA (107 aa). The tract at residues 2-163 is pre-S; it reads GQNLSTSNPL…FSRIGDPALN (162 aa). Residues 2 to 170 are Virion surface; in external conformation-facing; sequence GQNLSTSNPL…ALNMENITSG (169 aa). Residues 2–242 lie on the Intravirion; in internal conformation side of the membrane; that stretch reads GQNLSTSNPL…PGYRWMCLRR (241 aa). O-linked (GalNAc...) threonine glycosylation is present at Asn-37. The segment at 76–103 is disordered; that stretch reads TLPANPPPASTNRQSGRQPTPLSPPLRN. Residues 85-95 show a composition bias toward polar residues; the sequence is STNRQSGRQPT. The pre-S2 stretch occupies residues 109-163; it reads MQWNSTTFHQTLQDPRVRGLYFPAGGSSSGTVNPVLTTASPLSSIFSRIGDPALN. A helical transmembrane segment spans residues 171-191; it reads FLGPLLVLQAGFFLLTRILTI. Residues 192–242 are Intravirion; in external conformation-facing; the sequence is PQSLDSWWTSLNFLGGTTVCLGQNSQSPTSNHSPTSCPPTCPGYRWMCLRR. A helical membrane pass occupies residues 243 to 263; that stretch reads FIIFLFILLLCLIFLLVLLDY. Over 264–337 the chain is Virion surface; that stretch reads QGMLPVCPLI…WASARFSWLS (74 aa). Asn-309 is a glycosylation site (N-linked (GlcNAc...) asparagine; by host). Residues 338–358 form a helical membrane-spanning segment; the sequence is LLVPFVQWFVGLSPTVWLSVI. Over 359-364 the chain is Intravirion; it reads WMMWYW. A helical transmembrane segment spans residues 365-387; that stretch reads GPSLYSILSPFLPLLPIFFCLWV. Residues 388–389 lie on the Virion surface side of the membrane; that stretch reads YI.

The protein belongs to the orthohepadnavirus major surface antigen family. In its internal form (Li-HBsAg), interacts with the capsid protein and with the isoform S. Interacts with host chaperone CANX. As to quaternary structure, associates with host chaperone CANX through its pre-S2 N glycan; this association may be essential for isoform M proper secretion. In terms of assembly, interacts with isoform L. Interacts with the antigens of satellite virus HDV (HDVAgs); this interaction is required for encapsidation of HDV genomic RNA. Isoform M is N-terminally acetylated by host at a ratio of 90%, and N-glycosylated by host at the pre-S2 region. Post-translationally, myristoylated.

It is found in the virion membrane. Functionally, the large envelope protein exists in two topological conformations, one which is termed 'external' or Le-HBsAg and the other 'internal' or Li-HBsAg. In its external conformation the protein attaches the virus to cell receptors and thereby initiating infection. This interaction determines the species specificity and liver tropism. This attachment induces virion internalization predominantly through caveolin-mediated endocytosis. The large envelope protein also assures fusion between virion membrane and endosomal membrane. In its internal conformation the protein plays a role in virion morphogenesis and mediates the contact with the nucleocapsid like a matrix protein. In terms of biological role, the middle envelope protein plays an important role in the budding of the virion. It is involved in the induction of budding in a nucleocapsid independent way. In this process the majority of envelope proteins bud to form subviral lipoprotein particles of 22 nm of diameter that do not contain a nucleocapsid. This chain is Large envelope protein, found in Homo sapiens (Human).